The chain runs to 152 residues: D-aminoacyl-tRNA deacylase (152 aa).

A Gly-cisPro motif, important for rejection of L-amino acids motif is present at residues 137–138 (GP).

It belongs to the DTD family. Homodimer.

The protein resides in the cytoplasm. It carries out the reaction glycyl-tRNA(Ala) + H2O = tRNA(Ala) + glycine + H(+). It catalyses the reaction a D-aminoacyl-tRNA + H2O = a tRNA + a D-alpha-amino acid + H(+). Functionally, an aminoacyl-tRNA editing enzyme that deacylates mischarged D-aminoacyl-tRNAs. Also deacylates mischarged glycyl-tRNA(Ala), protecting cells against glycine mischarging by AlaRS. Acts via tRNA-based rather than protein-based catalysis; rejects L-amino acids rather than detecting D-amino acids in the active site. By recycling D-aminoacyl-tRNA to D-amino acids and free tRNA molecules, this enzyme counteracts the toxicity associated with the formation of D-aminoacyl-tRNA entities in vivo and helps enforce protein L-homochirality. This is D-aminoacyl-tRNA deacylase from Geobacter sulfurreducens (strain ATCC 51573 / DSM 12127 / PCA).